Here is a 562-residue protein sequence, read N- to C-terminus: Formate--tetrahydrofolate ligase (562 aa).

Residue 77-84 coordinates ATP; sequence TPAGEGKS.

This sequence belongs to the formate--tetrahydrofolate ligase family.

The enzyme catalyses (6S)-5,6,7,8-tetrahydrofolate + formate + ATP = (6R)-10-formyltetrahydrofolate + ADP + phosphate. It functions in the pathway one-carbon metabolism; tetrahydrofolate interconversion. The sequence is that of Formate--tetrahydrofolate ligase from Corynebacterium jeikeium (strain K411).